We begin with the raw amino-acid sequence, 427 residues long: Glycophorin-binding protein-related antigen (427 aa).

8 GBP repeats span residues 109–149, 150–189, 190–229, 230–269, 270–307, 308–347, 348–387, and 388–427; these read LTSA…DELE, TSADPEGQIMKAYAADPEYRKHLNVLYQILNNTDPNDEVE, SSADPEGQIMKAYAADPEYRKHVNVLYQILNNTDPNDELE, TSADPEGQIMKAYAADPEYRKHVNVLYQILNHTDSSEVET, SADPEGQIMKAYAADPEYRKHVNVLYQILNHTDSSEVE, TSADPEGQIMKAYAADPEYRKHVNVLYQILNNTDPNDELE, and TSADPEGQIMKAYAADPEYRKHVNVLYQILNNTDPNDESS.

The sequence is that of Glycophorin-binding protein-related antigen (GBPH) from Plasmodium falciparum (isolate FCBR / Columbia).